Consider the following 332-residue polypeptide: DNA packaging protein (332 aa).

The segment at 1-207 (MDKSLFYNPQ…SERRKTRFGR (207 aa)) is ATPase. Residue 24 to 31 (GARGIGKS) coordinates ATP. Residues 233 to 332 (KRSKDSKFVF…YELFRKMRIQ (100 aa)) are DNA-binding.

It belongs to the phi29likevirus gp16 family. As to quaternary structure, homopentamer. Interacts with the packaging RNA (pRNA). Part of a DNA-gp3-gp16 complex.

It carries out the reaction ATP + H2O = ADP + phosphate + H(+). ATPase required for the genome encapsidation reaction. Part of the active packaging motor via the binding to the packaging RNA (pRNA), itself fixed to the head-tail connector at the unique portal vertex of the prohead. Binds and supercoils the pre-formed, unit-length DNA bound to gp3 to produce an initiation complex for DNA packaging. Provides the energy to actively pump the viral DNA into the prohead. Approximately one molecule of ATP is used in the packaging of 2 bp of viral DNA. ATP hydrolysis results in a conformational change that causes the arginine/lysine finger of one subunit to move into the active site of its neighbor, where it interacts with the negatively charged oxygens on the gamma-phosphate of ATP. After packaging, the ATPase and the pRNA are released from the prohead. The chain is DNA packaging protein (16) from Bacillus subtilis (Bacteriophage PZA).